The chain runs to 548 residues: Glutamyl-tRNA(Gln) amidotransferase subunit B, chloroplastic/mitochondrial (548 aa).

It belongs to the GatB/GatE family. GatB subfamily. As to quaternary structure, subunit of the heterotrimeric GatCAB amidotransferase (AdT) complex, composed of A, B and C subunits.

Its subcellular location is the mitochondrion. The protein resides in the plastid. It is found in the chloroplast. It carries out the reaction L-glutamyl-tRNA(Gln) + L-glutamine + ATP + H2O = L-glutaminyl-tRNA(Gln) + L-glutamate + ADP + phosphate + H(+). Functionally, allows the formation of correctly charged Gln-tRNA(Gln) through the transamidation of misacylated Glu-tRNA(Gln) in chloroplasts and mitochondria. The reaction takes place in the presence of glutamine and ATP through an activated gamma-phospho-Glu-tRNA(Gln). The chain is Glutamyl-tRNA(Gln) amidotransferase subunit B, chloroplastic/mitochondrial from Sorghum bicolor (Sorghum).